Reading from the N-terminus, the 493-residue chain is EGF-containing fibulin-like extracellular matrix protein 1 (493 aa).

Positions 1–17 are cleaved as a signal peptide; that stretch reads MLQTVFLTMLTLALVKS. In terms of domain architecture, EGF-like 1; atypical spans 26–71; that stretch reads YTQCTDGYEWDPVRQQCKDIDECDIVPDACKGGMKCVNHYGGYLCL. The 41-residue stretch at 173 to 213 folds into the EGF-like 2; calcium-binding domain; sequence DIDECTSGTHNCRLDQVCINLRGSFTCHCLPGYQKRGEQCV. 15 disulfides stabilise this stretch: Cys-177–Cys-190, Cys-184–Cys-199, Cys-201–Cys-212, Cys-218–Cys-228, Cys-224–Cys-237, Cys-239–Cys-252, Cys-258–Cys-268, Cys-264–Cys-277, Cys-279–Cys-292, Cys-298–Cys-309, Cys-305–Cys-318, Cys-320–Cys-332, Cys-338–Cys-350, Cys-344–Cys-359, and Cys-365–Cys-377. In terms of domain architecture, EGF-like 3; calcium-binding spans 214–253; the sequence is DIDECSVPPYCHQGCVNTPGSFYCQCNPGFQLAANNYTCV. The N-linked (GlcNAc...) asparagine glycan is linked to Asn-249. An EGF-like 4; calcium-binding domain is found at 254–293; sequence DINECDASNQCAQQCYNILGSFICQCNQGYELSSDRLNCE. The mediates interaction with TIMP3 stretch occupies residues 259–493; it reads DASNQCAQQC…LTIIVGPFSF (235 aa). The EGF-like 5; calcium-binding domain occupies 294-333; that stretch reads DIDECRTSSYLCQYQCVNEPGKFSCMCPQGYQVVRSRTCQ. The 45-residue stretch at 334-378 folds into the EGF-like 6; calcium-binding domain; it reads DINECETTNECREDEMCWNYHGGFRCYPQNPCQDPYVLTSENRCV.

Belongs to the fibulin family. In terms of assembly, interacts with ECM1. Interacts with TIMP3. Expressed by olfactory ensheathing cells (at protein level). Detected in lung, intestine and kidney.

The protein localises to the secreted. Its subcellular location is the extracellular space. It localises to the extracellular matrix. Functionally, binds EGFR, the EGF receptor, inducing EGFR autophosphorylation and the activation of downstream signaling pathways. May play a role in cell adhesion and migration. May function as a negative regulator of chondrocyte differentiation. In the olfactory epithelium, it may regulate glial cell migration, differentiation and the ability of glial cells to support neuronal neurite outgrowth. This is EGF-containing fibulin-like extracellular matrix protein 1 (Efemp1) from Rattus norvegicus (Rat).